We begin with the raw amino-acid sequence, 426 residues long: MDENIIINILRKEMMPGLGVTEPASIALSSAKAYEVIGGEIKNIKIIADPGLFKNAFSCAIPGTKEVGNEMAALLGTICGDASLGLECLRKIKKEDVSKAKTMLDKIDIEIKSQTEGLYVESIVTTNNGIGRTIIRYKHDNIVLVEKNNKILYQKENNLNKSNNFSQEAIDSKKITEMKLDEIVEFVNNVNYEKIEFLLESIKMNKKLSEKGLEGLGIGLGKLILESCNENNYELYAEALTCSAIDARVSGAPVPAMTVTGSGNHGIITTLPLLAIKEKKNLNNEVLARSIALSYIINIYIKEFSGKLSAFCGCAVAAGTGVSAGICYLLGGSLKEIENTIKNMASNITGMICTGGNLACSLKANTGVKAAFLSAKMALNNIVIPNKCGIVSNSIEDTMKNIGRIAYPGMMETDKEILNIMIESSK.

It belongs to the UPF0597 family.

The polypeptide is UPF0597 protein CLB_1750 (Clostridium botulinum (strain ATCC 19397 / Type A)).